The sequence spans 362 residues: MNLTASVSMVYDGGHYIVVDSPSATDVHSKELMLKGIASRNIVPGEIQYVVTTHGHPDHFGQGNFFPNARHFFGSYEYSDTNFISTELHTKDIMQLTKNVQLWNTPGHTAQDVTVMVHNVSCCGIIAVAGDLFYNEEDANEAAGIWFQEAWNPIIGKISRNKVICYADYVIPGHGKLFRITQEMKNGADCFTKYETTLDDNKTVQSSPQFQNSIEQVIRKPAETLFSSANSVSFNYIGSPSTSASSSTRAIETTTAYSDSTTTTFYTVDLTAETPSTLESDIIFNSQENLPPLGMKIKKNANYIELPDLSGDVHPMVQSFAKKVSDVLKQPQNEAEISKMMPHLKKWQTTLTKLWKQYMNAN.

This is an uncharacterized protein from Caenorhabditis elegans.